The sequence spans 291 residues: Transcription initiation factor IIE subunit beta (291 aa).

M1 is modified (N-acetylmethionine). A compositionally biased stretch (basic and acidic residues) spans 1–13 (MDPSLLRERELFK). The segment at 1-63 (MDPSLLRERE…NSDHSNGSFN (63 aa)) is disordered. Residues 50–62 (GSKQNSDHSNGSF) are compositionally biased toward polar residues. Phosphoserine is present on S61. Positions 66–146 (ALSGSSGYKF…YAFKPKYNVR (81 aa)) form a DNA-binding region, TFIIE beta. K74 carries the post-translational modification N6-acetyllysine. The disordered stretch occupies residues 243–272 (SSMQESGPKKVAPIQRRKKPASQKKRRFKT). Residues 257-271 (QRRKKPASQKKRRFK) show a composition bias toward basic residues.

The protein belongs to the TFIIE beta subunit family. As to quaternary structure, tetramer of two alpha and two beta chains. Interacts with FACT subunit SUPT16H. Interacts with ATF7IP. Interacts with SND1. Part of TBP-based Pol II pre-initiation complex (PIC), in which Pol II core assembles with general transcription factors and other specific initiation factors including GTF2E1, GTF2E2, GTF2F1, GTF2F2, TCEA1, ERCC2, ERCC3, GTF2H2, GTF2H3, GTF2H4, GTF2H5, GTF2A1, GTF2A2, GTF2B and TBP; this large multi-subunit PIC complex mediates DNA unwinding and targets Pol II core to the transcription start site where the first phosphodiester bond forms.

The protein localises to the nucleus. Its function is as follows. Recruits TFIIH to the initiation complex and stimulates the RNA polymerase II C-terminal domain kinase and DNA-dependent ATPase activities of TFIIH. Both TFIIH and TFIIE are required for promoter clearance by RNA polymerase. This chain is Transcription initiation factor IIE subunit beta (GTF2E2), found in Homo sapiens (Human).